We begin with the raw amino-acid sequence, 337 residues long: F-box protein At2g27310 (337 aa).

The region spanning 10 to 58 (DSISTLHSDIIQTQILTRLDGPTLASTATTSSYLQTLCTEEKLWQELSI) is the F-box domain.

This chain is F-box protein At2g27310, found in Arabidopsis thaliana (Mouse-ear cress).